The sequence spans 303 residues: Protoheme IX farnesyltransferase (303 aa).

The next 7 membrane-spanning stretches (helical) occupy residues 25–45 (MGLVQGNLIPAFAGSWLAIVL), 54–74 (IPQILMMLVGSTLIMGGACAL), 118–138 (LLFALNIPSGVIGLLGIVGYV), 151–171 (WNTVIGSFPGAVPPLIGWTAI), 177–197 (LVAVALFLVIFCWQPIHFYAL), 230–250 (LVVLLPLPFLLSSLGVTFIVL), and 280–300 (FIYSLNYLVVFFVLVVVISLI).

It belongs to the UbiA prenyltransferase family. Protoheme IX farnesyltransferase subfamily. Interacts with CtaA.

It is found in the cell membrane. The enzyme catalyses heme b + (2E,6E)-farnesyl diphosphate + H2O = Fe(II)-heme o + diphosphate. The protein operates within porphyrin-containing compound metabolism; heme O biosynthesis; heme O from protoheme: step 1/1. Converts heme B (protoheme IX) to heme O by substitution of the vinyl group on carbon 2 of heme B porphyrin ring with a hydroxyethyl farnesyl side group. This is Protoheme IX farnesyltransferase from Staphylococcus saprophyticus subsp. saprophyticus (strain ATCC 15305 / DSM 20229 / NCIMB 8711 / NCTC 7292 / S-41).